The chain runs to 197 residues: dITP/XTP pyrophosphatase (197 aa).

8 to 13 (TGNVGK) contacts substrate. The Mg(2+) site is built by E40 and D69. D69 serves as the catalytic Proton acceptor. Substrate is bound by residues S70, 154–157 (FGYD), K177, and 182–183 (HR).

Belongs to the HAM1 NTPase family. In terms of assembly, homodimer. Mg(2+) serves as cofactor. Mn(2+) is required as a cofactor. The cofactor is Ni(2+).

It catalyses the reaction XTP + H2O = XMP + diphosphate + H(+). The enzyme catalyses dITP + H2O = dIMP + diphosphate + H(+). It carries out the reaction ITP + H2O = IMP + diphosphate + H(+). Pyrophosphatase that catalyzes the hydrolysis of nucleoside triphosphates to their monophosphate derivatives, with a high preference for the non-canonical purine nucleotides XTP (xanthosine triphosphate), dITP (deoxyinosine triphosphate) and ITP. Can also efficiently hydrolyze 2'-deoxy-N-6-hydroxylaminopurine triphosphate (dHAPTP). Seems to function as a house-cleaning enzyme that removes non-canonical purine nucleotides from the nucleotide pool, thus preventing their incorporation into DNA/RNA and avoiding chromosomal lesions. To a much lesser extent, is also able to hydrolyze GTP, dGTP and dUTP, but shows very low activity toward the canonical nucleotides dATP, dCTP and dTTP and toward 8-oxo-dGTP, purine deoxyribose triphosphate, 2-aminopurine deoxyribose triphosphate and 2,6-diaminopurine deoxyribose triphosphate. In terms of biological role, genetic interactions among priB, dam, lexA, nagC, polA, rdgB, rdgB, rep and uup link the PriA-PriB replication restart pathway to DNA double-strand break repair. The chain is dITP/XTP pyrophosphatase from Escherichia coli (strain K12).